The chain runs to 430 residues: Serine--tRNA ligase (430 aa).

Residue 236–238 coordinates L-serine; that stretch reads TAE. 267 to 269 provides a ligand contact to ATP; that stretch reads RSE. L-serine is bound at residue Glu-290. 354–357 serves as a coordination point for ATP; that stretch reads EISS. L-serine is bound at residue Ser-390.

It belongs to the class-II aminoacyl-tRNA synthetase family. Type-1 seryl-tRNA synthetase subfamily. Homodimer. The tRNA molecule binds across the dimer.

The protein resides in the cytoplasm. The enzyme catalyses tRNA(Ser) + L-serine + ATP = L-seryl-tRNA(Ser) + AMP + diphosphate + H(+). The catalysed reaction is tRNA(Sec) + L-serine + ATP = L-seryl-tRNA(Sec) + AMP + diphosphate + H(+). It participates in aminoacyl-tRNA biosynthesis; selenocysteinyl-tRNA(Sec) biosynthesis; L-seryl-tRNA(Sec) from L-serine and tRNA(Sec): step 1/1. Catalyzes the attachment of serine to tRNA(Ser). Is also able to aminoacylate tRNA(Sec) with serine, to form the misacylated tRNA L-seryl-tRNA(Sec), which will be further converted into selenocysteinyl-tRNA(Sec). The polypeptide is Serine--tRNA ligase (Mannheimia succiniciproducens (strain KCTC 0769BP / MBEL55E)).